The primary structure comprises 418 residues: UDP-glucuronic acid decarboxylase 1 (418 aa).

Topologically, residues 1-17 are cytoplasmic; it reads MMRMSWMVTVINRRMMK. The chain crosses the membrane as a helical; Signal-anchor for type II membrane protein span at residues 18–38; the sequence is ILIALALIAYIASVWGTYANM. Over 39-418 the chain is Lumenal; that stretch reads RSIQEHGEMK…RMKKGRPRHN (380 aa). NAD(+)-binding residues include glycine 96, phenylalanine 97, valine 98, aspartate 117, asparagine 118, phenylalanine 120, threonine 121, glycine 122, aspartate 142, and valine 143. UDP-alpha-D-glucuronate-binding residues include leucine 147 and tyrosine 148. Residues leucine 157 and serine 159 each coordinate NAD(+). Lysine 175 is a binding site for UDP-alpha-D-glucuronate. Threonine 176 lines the NAD(+) pocket. UDP-alpha-D-glucuronate contacts are provided by asparagine 183, glycine 186, lysine 189, and arginine 190. Positions 198, 229, and 233 each coordinate NAD(+). Tyrosine 229 serves as the catalytic Proton acceptor. 3 residues coordinate UDP-alpha-D-glucuronate: tyrosine 243, glutamine 246, and glutamate 247. NAD(+) contacts are provided by threonine 259, histidine 265, and arginine 270. N-linked (GlcNAc...) asparagine glycosylation is found at asparagine 314 and asparagine 383. Positions 397–418 are disordered; that stretch reads ANNQYIPKPKAARMKKGRPRHN. Positions 406-418 are enriched in basic residues; that stretch reads KAARMKKGRPRHN.

This sequence belongs to the NAD(P)-dependent epimerase/dehydratase family. UDP-glucuronic acid decarboxylase subfamily. Homodimer and homotetramer. It depends on NAD(+) as a cofactor.

Its subcellular location is the golgi apparatus. The protein localises to the golgi stack membrane. The enzyme catalyses UDP-alpha-D-glucuronate + H(+) = UDP-alpha-D-xylose + CO2. It functions in the pathway nucleotide-sugar biosynthesis; UDP-alpha-D-xylose biosynthesis; UDP-alpha-D-xylose from UDP-alpha-D-glucuronate: step 1/1. Functionally, catalyzes the NAD-dependent decarboxylation of UDP-glucuronic acid to UDP-xylose. Necessary for the biosynthesis of the core tetrasaccharide in glycosaminoglycan biosynthesis. Essential during embryogenesis for craniofacial development. In Danio rerio (Zebrafish), this protein is UDP-glucuronic acid decarboxylase 1.